The following is a 182-amino-acid chain: Dual-action ribosomal maturation protein DarP (182 aa).

Residues 1–20 form a disordered region; it reads MNKQPEEWQDPQSLQQQDDE.

Belongs to the DarP family.

The protein localises to the cytoplasm. Its function is as follows. Member of a network of 50S ribosomal subunit biogenesis factors which assembles along the 30S-50S interface, preventing incorrect 23S rRNA structures from forming. Promotes peptidyl transferase center (PTC) maturation. This is Dual-action ribosomal maturation protein DarP from Sodalis glossinidius (strain morsitans).